A 640-amino-acid polypeptide reads, in one-letter code: SH3 domain-containing protein 21 (640 aa).

A disordered region spans residues 1–60 (MVQSELQLQPRAGGRAEAASWGDRGNDKGGLGNPDMPSVSPGPQRPPKLSSLAYDSPPDY). An SH3 domain is found at 65 to 126 (SHPEVYRVLF…PDNFVLPPPP (62 aa)). 3 disordered regions span residues 133 to 361 (RKVV…PLGD), 401 to 551 (YFVA…PDSQ), and 618 to 640 (VQVMQGTQKSQTPRVIHTQTQTY). The segment covering 177–186 (PSRDSQKLTS) has biased composition (basic and acidic residues). Over residues 210–220 (TQTPQQRSVSS) the composition is skewed to polar residues. 3 stretches are compositionally biased toward basic and acidic residues: residues 401-416 (YFVAKEDPSSQEEAHT), 459-469 (ALEKPHPHEEA), and 494-532 (RPLREEVLPKEGVASKEEVTLKEELPPKEEVAPKEEVPP). Residues 572–626 (VDVTSLRGEVESLRRALELMEVQLERKLTDIWEELKSEKEQRRRLEVQVMQGTQK) are a coiled coil. Residues 621–640 (MQGTQKSQTPRVIHTQTQTY) show a composition bias toward polar residues.

In Homo sapiens (Human), this protein is SH3 domain-containing protein 21 (SH3D21).